The primary structure comprises 273 residues: F-actin-capping protein subunit alpha (273 aa).

It belongs to the F-actin-capping protein alpha subunit family. Component of the F-actin capping complex, composed of a heterodimer of an alpha and a beta subunit.

The protein resides in the cytoplasm. It is found in the cytoskeleton. The protein localises to the actin patch. In terms of biological role, F-actin-capping proteins bind in a Ca(2+)-independent manner to the fast growing ends of actin filaments (barbed end) thereby blocking the exchange of subunits at these ends. Unlike other capping proteins (such as gelsolin and severin), these proteins do not sever actin filaments. The sequence is that of F-actin-capping protein subunit alpha (fac-1) from Neurospora crassa (strain ATCC 24698 / 74-OR23-1A / CBS 708.71 / DSM 1257 / FGSC 987).